The following is a 75-amino-acid chain: MLVLARKVGESIFIGNDVEVKILKIDGGEVKIGISAPKSVRILRKELYEEIMAENKKAIEFDIKDISEVSKFENR.

Belongs to the CsrA/RsmA family. As to quaternary structure, homodimer; the beta-strands of each monomer intercalate to form a hydrophobic core, while the alpha-helices form wings that extend away from the core.

The protein resides in the cytoplasm. Functionally, a translational regulator that binds mRNA to regulate translation initiation and/or mRNA stability. Usually binds in the 5'-UTR at or near the Shine-Dalgarno sequence preventing ribosome-binding, thus repressing translation. Its main target seems to be the major flagellin gene, while its function is anatagonized by FliW. The chain is Translational regulator CsrA from Thermosipho melanesiensis (strain DSM 12029 / CIP 104789 / BI429).